A 329-amino-acid polypeptide reads, in one-letter code: 4-hydroxythreonine-4-phosphate dehydrogenase (329 aa).

Substrate is bound by residues H136 and T137. A divalent metal cation is bound by residues H166, H211, and H266. Positions 274, 283, and 292 each coordinate substrate.

It belongs to the PdxA family. Homodimer. Requires Zn(2+) as cofactor. It depends on Mg(2+) as a cofactor. Co(2+) serves as cofactor.

It is found in the cytoplasm. It carries out the reaction 4-(phosphooxy)-L-threonine + NAD(+) = 3-amino-2-oxopropyl phosphate + CO2 + NADH. It functions in the pathway cofactor biosynthesis; pyridoxine 5'-phosphate biosynthesis; pyridoxine 5'-phosphate from D-erythrose 4-phosphate: step 4/5. In terms of biological role, catalyzes the NAD(P)-dependent oxidation of 4-(phosphooxy)-L-threonine (HTP) into 2-amino-3-oxo-4-(phosphooxy)butyric acid which spontaneously decarboxylates to form 3-amino-2-oxopropyl phosphate (AHAP). This is 4-hydroxythreonine-4-phosphate dehydrogenase from Salmonella arizonae (strain ATCC BAA-731 / CDC346-86 / RSK2980).